A 126-amino-acid chain; its full sequence is Small ribosomal subunit protein uS13 (126 aa).

The disordered stretch occupies residues 92–126 (RMGLPVRGQRTRTNARTRRGGRRTVAGKKKAPAKK). The span at 100-126 (QRTRTNARTRRGGRRTVAGKKKAPAKK) shows a compositional bias: basic residues.

It belongs to the universal ribosomal protein uS13 family. In terms of assembly, part of the 30S ribosomal subunit. Forms a loose heterodimer with protein S19. Forms two bridges to the 50S subunit in the 70S ribosome.

Located at the top of the head of the 30S subunit, it contacts several helices of the 16S rRNA. In the 70S ribosome it contacts the 23S rRNA (bridge B1a) and protein L5 of the 50S subunit (bridge B1b), connecting the 2 subunits; these bridges are implicated in subunit movement. Contacts the tRNAs in the A and P-sites. The chain is Small ribosomal subunit protein uS13 from Cyanothece sp. (strain PCC 7425 / ATCC 29141).